Consider the following 496-residue polypeptide: Lysine--tRNA ligase (496 aa).

Mg(2+)-binding residues include glutamate 409 and glutamate 416.

It belongs to the class-II aminoacyl-tRNA synthetase family. In terms of assembly, homodimer. The cofactor is Mg(2+).

Its subcellular location is the cytoplasm. It carries out the reaction tRNA(Lys) + L-lysine + ATP = L-lysyl-tRNA(Lys) + AMP + diphosphate. This chain is Lysine--tRNA ligase, found in Streptococcus gordonii (strain Challis / ATCC 35105 / BCRC 15272 / CH1 / DL1 / V288).